Here is a 270-residue protein sequence, read N- to C-terminus: Extracellular metalloprotease MCYG_04966 (270 aa).

An N-terminal signal peptide occupies residues 1-19 (MRLSLFLSGLAAAGSIVSA). N-linked (GlcNAc...) asparagine glycosylation occurs at Asn135. His184 contacts Zn(2+). Glu185 is an active-site residue. His188 is a Zn(2+) binding site. N-linked (GlcNAc...) asparagine glycosylation is present at Asn199. The segment at 208 to 227 (VADTPPQSKKTSGCPNSQDS) is disordered. Residues 212–227 (PPQSKKTSGCPNSQDS) are compositionally biased toward polar residues. Cys221 and Cys247 are joined by a disulfide.

This sequence belongs to the peptidase M43B family.

The protein resides in the secreted. Functionally, secreted metalloproteinase that allows assimilation of proteinaceous substrates. Plays a pivotal role as a pathogenicity determinant during infections and contributes to the ability of the pathogen to persist within the mammalian host. The polypeptide is Extracellular metalloprotease MCYG_04966 (Arthroderma otae (strain ATCC MYA-4605 / CBS 113480) (Microsporum canis)).